The following is a 329-amino-acid chain: Stimulator of interferon genes protein (329 aa).

Over 1 to 4 (MACV) the chain is Cytoplasmic. Residues 5–25 (LAIGSILFVWILGKGKYSGAQ) form a helical membrane-spanning segment. Residue L26 is a topological domain, lumenal. The helical transmembrane segment at 27-52 (IYRMATNFAISQGCCLVTCACELTEE) threads the bilayer. The Cytoplasmic portion of the chain corresponds to 53–74 (IKHLHTRYNGHYWRALKASFNL). The chain crosses the membrane as a helical span at residues 75–88 (SCAAFVTAILCYVF). Over 89–98 (YEPKLMASLP) the chain is Lumenal. Residues 99–116 (LTIDITLTLLSWLFCWIL) traverse the membrane as a helical segment. Topologically, residues 117 to 329 (GIQGPTPATI…QQHSEEYSML (213 aa)) are cytoplasmic. A cyclic dinucleotide-binding domain (CBD) region spans residues 135–325 (LNVAHGLAWS…KHIRQQHSEE (191 aa)). 2',3'-cGAMP is bound by residues S144, Y149, R220, and T245. 3',3'-c-di-GMP is bound by residues S144, Y149, 220–223 (RVFK), and T245.

The protein belongs to the STING family. In terms of assembly, homodimer; forms a homodimer in absence of cyclic nucleotide (c-di-GMP or cGAMP). Homotetramer; in presence of cyclic nucleotide (c-di-GMP or cGAMP), forms tetramers and higher-order oligomers through side-by-side packing.

It is found in the endoplasmic reticulum membrane. The protein localises to the cytoplasm. It localises to the perinuclear region. Its subcellular location is the endoplasmic reticulum-Golgi intermediate compartment membrane. The protein resides in the golgi apparatus membrane. It is found in the cytoplasmic vesicle. The protein localises to the autophagosome membrane. The catalysed reaction is H(+)(in) = H(+)(out). Functionally, sensor of cytosolic DNA from bacteria and viruses that promotes autophagy. Acts by recognizing and binding cyclic GMP-AMP (cGAMP), a messenger produced by CGAS in response to DNA in the cytosol. Exhibits guanine base-specific ligand recognition: binds 3'-3'linked cGAMP, 2'-3' linked cGAMP and 3'-3' linked c-di-GMP with much greater affinity as compared to 3'-3' linked c-di-AMP. Following cGAMP-binding, promotes the formation of autophagosomes, leading to target cytosolic DNA for degradation by the lysosome. Promotes autophagy by acting as a proton channel that directs proton efflux from the Golgi to facilitate LC3 lipidation. Lacks the C-terminal tail (CTT) found in other vertebrate orthologs which is essential for interferon signaling. This chain is Stimulator of interferon genes protein, found in Xenopus tropicalis (Western clawed frog).